The following is a 78-amino-acid chain: Large ribosomal subunit protein uL29 (78 aa).

This sequence belongs to the universal ribosomal protein uL29 family.

This is Large ribosomal subunit protein uL29 from Rhodococcus erythropolis (strain PR4 / NBRC 100887).